We begin with the raw amino-acid sequence, 420 residues long: Glycerol-3-phosphate dehydrogenase [NAD(+)] 2, chloroplastic (420 aa).

A chloroplast-targeting transit peptide spans 1-45 (MAASVQPACLDLHFSGKHPPLLKHNAIIVRCVSSPNVIPEADSIS). NAD(+)-binding positions include 94–99 (GGGSFG), F171, K194, and A228. K194 contacts substrate. Residue K279 is the Proton acceptor of the active site. Residues R343 and E369 each coordinate NAD(+). 343 to 344 (RN) serves as a coordination point for substrate.

This sequence belongs to the NAD-dependent glycerol-3-phosphate dehydrogenase family.

It localises to the plastid. Its subcellular location is the chloroplast. The catalysed reaction is sn-glycerol 3-phosphate + NAD(+) = dihydroxyacetone phosphate + NADH + H(+). Its pathway is membrane lipid metabolism; glycerophospholipid metabolism. In terms of biological role, required to supply glycerol-3-phosphate in the chloroplast for the synthesis of glycerolipids. Required for activation of systemic acquired resistance (SAR). Provision of glycerol-3-phosphate may be involved in generating lipid signals necessary for mediating defense responses and SAR. The sequence is that of Glycerol-3-phosphate dehydrogenase [NAD(+)] 2, chloroplastic (GLY1) from Arabidopsis thaliana (Mouse-ear cress).